We begin with the raw amino-acid sequence, 215 residues long: MRVILLGAPGAGKGTQARFITEKFGIPQISTGDMLRAAVKAGSPLGQQVKGVMDSGGLVSDDIIIALIKERITEADCAKGFLFDGFPRTIPQAEALKDAGVTIDHVVEIAVDDEEIVSRIAGRRVHPASGRVYHTEHNPPKVAGKDDVTGEDLIQREDDKEETVRHRLSVYHSQTKPLVDFYQKLSAAEGTPKYHSIAGVGSVEQITAKVLSALS.

10-15 (GAGKGT) is an ATP binding site. The segment at 30–59 (STGDMLRAAVKAGSPLGQQVKGVMDSGGLV) is NMP. AMP contacts are provided by residues threonine 31, arginine 36, 57–59 (GLV), 85–88 (GFPR), and glutamine 92. The LID stretch occupies residues 122-159 (GRRVHPASGRVYHTEHNPPKVAGKDDVTGEDLIQREDD). ATP is bound by residues arginine 123 and 132–133 (VY). AMP contacts are provided by arginine 156 and arginine 167. Glycine 201 lines the ATP pocket.

The protein belongs to the adenylate kinase family. Monomer.

It localises to the cytoplasm. It carries out the reaction AMP + ATP = 2 ADP. It participates in purine metabolism; AMP biosynthesis via salvage pathway; AMP from ADP: step 1/1. Its function is as follows. Catalyzes the reversible transfer of the terminal phosphate group between ATP and AMP. Plays an important role in cellular energy homeostasis and in adenine nucleotide metabolism. This is Adenylate kinase from Pseudomonas paraeruginosa (strain DSM 24068 / PA7) (Pseudomonas aeruginosa (strain PA7)).